The chain runs to 600 residues: DDB1- and CUL4-associated factor 8-like protein 1 (600 aa).

A disordered region spans residues 1–122; that stretch reads MSHQEGSTGG…EEEQPRMCPR (122 aa). 2 stretches are compositionally biased toward acidic residues: residues 74–83 and 96–115; these read SSSEDVELES and EETEREEEEEEMEEEGEEEE. WD repeat units lie at residues 194–233, 237–278, 284–324, 332–372, 388–427, 435–475, and 479–518; these read SHAGSVSTIHFNQRGTRLASSGDDLRVIVWDWVRQKPVLN, GHDI…YCEN, KHRG…PASK, DKKV…KKEN, DFPTNITCVVYSHDGTELLASYNDEDIYLFNSSLSDGAQY, RNND…IIQF, and DRGDIVNCLEPHPYLPVLATSGLDQHVRIWTPTAKTATEL. A disordered region spans residues 562-600; it reads PGWRDHGAEFPDEEELDESSSTSDTSEEEGQDRVQCIPS.

This sequence belongs to the WD repeat DCAF8 family.

The polypeptide is DDB1- and CUL4-associated factor 8-like protein 1 (DCAF8L1) (Homo sapiens (Human)).